A 444-amino-acid polypeptide reads, in one-letter code: Tol-Pal system protein TolB (444 aa).

The signal sequence occupies residues 1–19 (MRNIIYFILLLLFSFKGYA).

This sequence belongs to the TolB family. In terms of assembly, the Tol-Pal system is composed of five core proteins: the inner membrane proteins TolA, TolQ and TolR, the periplasmic protein TolB and the outer membrane protein Pal. They form a network linking the inner and outer membranes and the peptidoglycan layer.

It is found in the periplasm. Its function is as follows. Part of the Tol-Pal system, which plays a role in outer membrane invagination during cell division and is important for maintaining outer membrane integrity. The polypeptide is Tol-Pal system protein TolB (Rickettsia akari (strain Hartford)).